Here is a 262-residue protein sequence, read N- to C-terminus: Phosphomannomutase 1 (262 aa).

Ala2 is modified (N-acetylalanine). Asp19 acts as the Nucleophile in catalysis. Mg(2+) is bound by residues Asp19 and Asp21. Catalysis depends on Asp21, which acts as the Proton donor/acceptor. 7 residues coordinate alpha-D-mannose 1-phosphate: Arg28, Arg132, Arg143, Arg150, Met186, Ser188, and Asp190. Positions 218, 230, 232, and 235 each coordinate Mg(2+). Ser242 is modified (phosphoserine).

Belongs to the eukaryotic PMM family. As to quaternary structure, homodimer. The cofactor is Mg(2+). In terms of tissue distribution, strong expression in liver, heart, brain, and pancreas; lower expression in skeletal muscle.

It localises to the cytoplasm. It catalyses the reaction alpha-D-mannose 1-phosphate = D-mannose 6-phosphate. It functions in the pathway nucleotide-sugar biosynthesis; GDP-alpha-D-mannose biosynthesis; alpha-D-mannose 1-phosphate from D-fructose 6-phosphate: step 2/2. Its activity is regulated as follows. IMP, a metabolite whose concentration is elevated in anoxia, inhibits phosphomannomutase and phosphoglucomutase activities and strongly enhances glucose-1,6-bisphosphatase activity. Functionally, involved in the synthesis of the GDP-mannose and dolichol-phosphate-mannose required for a number of critical mannosyl transfer reactions. In addition, may be responsible for the degradation of glucose-1,6-bisphosphate in ischemic brain. The protein is Phosphomannomutase 1 (PMM1) of Homo sapiens (Human).